A 192-amino-acid chain; its full sequence is Signal peptidase complex catalytic subunit SEC11C (192 aa).

Topologically, residues 1–28 are cytoplasmic; sequence MVRAGAVGTHLPTSSLDIFGDLRKMNKR. The helical; Signal-anchor for type II membrane protein transmembrane segment at 29–48 threads the bilayer; that stretch reads QLYYQVLNFAMIVSSALMIW. Residues 49–192 lie on the Lumenal side of the membrane; sequence KGLIVLTGSE…GAYVLLKRES (144 aa). Catalysis depends on charge relay system residues Ser68, His108, and Asp134. The tract at residues 177-188 is C-terminal short (CTS) helix; that stretch reads ALVAVMGAYVLL.

Belongs to the peptidase S26B family. Component of the signal peptidase complex paralog C (SPC-C) composed of a catalytic subunit SEC11C and three accessory subunits SPCS1, SPCS2 and SPCS3. Within the complex, interacts with SPCS2 and SPCS3. The complex induces a local thinning of the ER membrane which is used to measure the length of the signal peptide (SP) h-region of protein substrates. This ensures the selectivity of the complex towards h-regions shorter than 18-20 amino acids. In terms of processing, may undergo processing at the N-terminus.

Its subcellular location is the endoplasmic reticulum membrane. The enzyme catalyses Cleavage of hydrophobic, N-terminal signal or leader sequences from secreted and periplasmic proteins.. Its function is as follows. Catalytic component of the signal peptidase complex (SPC) which catalyzes the cleavage of N-terminal signal sequences from nascent proteins as they are translocated into the lumen of the endoplasmic reticulum. Specifically cleaves N-terminal signal peptides that contain a hydrophobic alpha-helix (h-region) shorter than 18-20 amino acids. The sequence is that of Signal peptidase complex catalytic subunit SEC11C (Sec11c) from Rattus norvegicus (Rat).